Reading from the N-terminus, the 229-residue chain is tRNA (guanine-N(7)-)-methyltransferase (229 aa).

The S-adenosyl-L-methionine site is built by E59, E84, D111, and D134. The active site involves D134. K138 lines the substrate pocket. An interaction with RNA region spans residues 140–145 (KHNKRR). Residues D170 and 207-210 (TKFE) each bind substrate.

The protein belongs to the class I-like SAM-binding methyltransferase superfamily. TrmB family.

It carries out the reaction guanosine(46) in tRNA + S-adenosyl-L-methionine = N(7)-methylguanosine(46) in tRNA + S-adenosyl-L-homocysteine. Its pathway is tRNA modification; N(7)-methylguanine-tRNA biosynthesis. Functionally, catalyzes the formation of N(7)-methylguanine at position 46 (m7G46) in tRNA. This chain is tRNA (guanine-N(7)-)-methyltransferase, found in Saccharophagus degradans (strain 2-40 / ATCC 43961 / DSM 17024).